Reading from the N-terminus, the 2012-residue chain is MWILALSLFQSFANVFSEDLHSSLYFVNASLQEVVFASTTGTLVPCPAAGIPPVTLRWYLATGEEIYDVPGIRHVHPNGTLQIFPFPPSSFSTLIHDNTYYCTAENPSGKIRSQDVHIKAVLREPYTVRVEDQKTMRGNVAVFKCIIPSSVEAYITVVSWEKDTVSLVSGSRFLITSTGALYIKDVQNEDGLYNYRCITRHRYTGETRQSNSARLFVSDPANSAPSILDGFDHRKAMAGQRVELPCKALGHPEPDYRWLKDNMPLELSGRFQKTVTGLLIENIRPSDSGSYVCEVSNRYGTAKVIGRLYVKQPLKATISPRKVKSSVGSQVSLSCSVTGTEDQELSWYRNGEILNPGKNVRITGINHENLIMDHMVKSDGGAYQCFVRKDKLSAQDYVQVVLEDGTPKIISAFSEKVVSPAEPVSLMCNVKGTPLPTITWTLDDDPILKGGSHRISQMITSEGNVVSYLNISSSQVRDGGVYRCTANNSAGVVLYQARINVRGPASIRPMKNITAIAGRDTYIHCRVIGYPYYSIKWYKNSNLLPFNHRQVAFENNGTLKLSDVQKEVDEGEYTCNVLVQPQLSTSQSVHVTVKVPPFIQPFEFPRFSIGQRVFIPCVVVSGDLPITITWQKDGRPIPGSLGVTIDNIDFTSSLRISNLSLMHNGNYTCIARNEAAAVEHQSQLIVRVPPKFVVQPRDQDGIYGKAVILNCSAEGYPVPTIVWKFSKGAGVPQFQPIALNGRIQVLSNGSLLIKHVVEEDSGYYLCKVSNDVGADVSKSMYLTVKIPAMITSYPNTTLATQGQKKEMSCTAHGEKPIIVRWEKEDRIINPEMARYLVSTKEVGEEVISTLQILPTVREDSGFFSCHAINSYGEDRGIIQLTVQEPPDPPEIEIKDVKARTITLRWTMGFDGNSPITGYDIECKNKSDSWDSAQRTKDVSPQLNSATIIDIHPSSTYSIRMYAKNRIGKSEPSNELTITADEAAPDGPPQEVHLEPISSQSIRVTWKAPKKHLQNGIIRGYQIGYREYSTGGNFQFNIISVDTSGDSEVYTLDNLNKFTQYGLVVQACNRAGTGPSSQEIITTTLEDVPSYPPENVQAIATSPESISISWSTLSKEALNGILQGFRVIYWANLMDGELGEIKNITTTQPSLELDGLEKYTNYSIQVLAFTRAGDGVRSEQIFTRTKEDVPGPPAGVKAAAASASMVFVSWLPPLKLNGIIRKYTVFCSHPYPTVISEFEASPDSFSYRIPNLSRNRQYSVWVVAVTSAGRGNSSEIITVEPLAKAPARILTFSGTVTTPWMKDIVLPCKAVGDPSPAVKWMKDSNGTPSLVTIDGRRSIFSNGSFIIRTVKAEDSGYYSCIANNNWGSDEIILNLQVQVPPDQPRLTVSKTTSSSITLSWLPGDNGGSSIRGYILQYSEDNSEQWGSFPISPSERSYRLENLKCGTWYKFTLTAQNGVGPGRISEIIEAKTLGKEPQFSKEQELFASINTTRVRLNLIGWNDGGCPITSFTLEYRPFGTTVWTTAQRTSLSKSYILYDLQEATWYELQMRVCNSAGCAEKQANFATLNYDGSTIPPLIKSVVQNEEGLTTNEGLKMLVTISCILVGVLLLFVLLLVVRRRRREQRLKRLRDAKSLAEMLMSKNTRTSDTLSKQQQTLRMHIDIPRAQLLIEERDTMETIDDRSTVLLTDADFGEAAKQKSLTVTHTVHYQSVSQATGPLVDVSDARPGTNPTTRRNAKAGPTARNRYASQWTLNRPHPTISAHTLTTDWRLPTPRAAGSVDKESDSYSVSPSQDTDRARSSMVSTESASSTYEELARAYEHAKMEEQLRHAKFTITECFISDTSSEQLTAGTNEYTDSLTSSTPSESGICRFTASPPKPQDGGRVMNMAVPKAHRPGDLIHLPPYLRMDFLLNRGGPGTSRDLSLGQACLEPQKSRTLKRPTVLEPIPMEAASSASSTREGQSWQPGAVATLPQREGAELGQAAKMSSSQESLLDSRGHLKGNNPYAKSYTLV.

Residues 1–17 (MWILALSLFQSFANVFS) form the signal peptide. Residues 18-1595 (EDLHSSLYFV…GLTTNEGLKM (1578 aa)) are Extracellular-facing. Residues Asn28 and Asn78 are each glycosylated (N-linked (GlcNAc...) asparagine). Ig-like C2-type domains follow at residues 39–129 (TTGT…YTVR), 125–216 (PYTV…ARLF), 225–305 (PSIL…AKVI), 313–401 (PLKA…VQVV), 407–500 (PKII…ARIN), 504–592 (PASI…VHVT), 596–685 (PPFI…SQLI), 690–783 (PKFV…MYLT), and 787–883 (PAMI…LTVQ). 5 disulfides stabilise this stretch: Cys46–Cys102, Cys145–Cys197, Cys246–Cys293, Cys335–Cys385, and Cys428–Cys484. N-linked (GlcNAc...) asparagine glycans are attached at residues Asn470, Asn487, Asn512, Asn556, Asn658, Asn666, Asn710, Asn748, and Asn795. 2 cysteine pairs are disulfide-bonded: Cys525–Cys575 and Cys617–Cys669. Cys711 and Cys766 form a disulfide bridge. A disulfide bridge connects residues Cys809 and Cys865. Fibronectin type-III domains lie at 885-982 (PPDP…ADEA), 987-1086 (PPQE…TLED), 1091-1187 (PPEN…TKED), and 1191-1285 (PPAG…AKAP). Residue Asn924 is glycosylated (N-linked (GlcNAc...) asparagine). Residues Asn1142, Asn1160, Asn1250, Asn1271, and Asn1341 are each glycosylated (N-linked (GlcNAc...) asparagine). Residues 1285–1377 (PARILTFSGT…DEIILNLQVQ (93 aa)) enclose the Ig-like C2-type 10 domain. The cysteines at positions 1307 and 1359 are disulfide-linked. Fibronectin type-III domains follow at residues 1379 to 1473 (PPDQ…TLGK) and 1474 to 1575 (EPQF…TIPP). N-linked (GlcNAc...) asparagine glycosylation occurs at Asn1488. Residues 1596–1616 (LVTISCILVGVLLLFVLLLVV) form a helical membrane-spanning segment. Residues 1617–2012 (RRRRREQRLK…NPYAKSYTLV (396 aa)) lie on the Cytoplasmic side of the membrane. The interval 1617 to 2012 (RRRRREQRLK…NPYAKSYTLV (396 aa)) is required for netrin-mediated axon repulsion of neuronal growth cones. 3 disordered regions span residues 1718 to 1810 (LVDV…ASST), 1855 to 1883 (TDSL…DGGR), and 1971 to 2012 (LPQR…YTLV). Residues 1799–1809 (SSMVSTESASS) are compositionally biased toward low complexity. Over residues 1855–1865 (TDSLTSSTPSE) the composition is skewed to polar residues.

In terms of assembly, homodimer; mediates homophilic interactions to promote cell adhesion. Interacts with DCC; the interaction is abolished in response to NTN1. Interacts (via extracellular domain) with NTN1. Interacts (via extracellular domain) with UNC5C (via Ig-like C2-type domain). Interacts with PTK2. Interacts with FYN. Post-translationally, phosphorylated at tyrosine residues. Phosphorylation is enhanced by NTN1. Primarily expressed in brain.

The protein localises to the secreted. Its subcellular location is the cell membrane. The protein resides in the cell projection. It localises to the axon. It is found in the dendrite. The protein localises to the growth cone. Its subcellular location is the synapse. Its function is as follows. Cell adhesion molecule that plays a role in neuronal self-avoidance. Promotes repulsion between specific neuronal processes of either the same cell or the same subtype of cells. Mediates within retinal amacrine and ganglion cell subtypes both isoneuronal self-avoidance for creating an orderly dendritic arborization and heteroneuronal self-avoidance to maintain the mosaic spacing between amacrine and ganglion cell bodies. Receptor for netrin required for axon guidance independently of and in collaboration with the receptor DCC. Might also collaborate with UNC5C in NTN1-mediated axon repulsion independently of DCC. In spinal cord development plays a role in guiding commissural axons projection and pathfinding across the ventral midline to reach the floor plate upon ligand binding. Mediates intracellular signaling by stimulating the activation of MAPK8 and MAP kinase p38. Adhesion molecule that promotes lamina-specific synaptic connections in the retina: expressed in specific subsets of interneurons and retinal ganglion cells (RGCs) and promotes synaptic connectivity via homophilic interactions. In Homo sapiens (Human), this protein is Cell adhesion molecule DSCAM (DSCAM).